Here is a 285-residue protein sequence, read N- to C-terminus: MSIHGILGEQTTDYPTEYSPETLYPIARSMGREVIGWQDDKLEVGFDWWQAFELSWLNEQGISQVAIARFGIPASSPFIVESKSLKLYLNSINFTEFGSLETVQTLIAKDLSKCVQAEVNVELFDLEDEHSGLLIAQPDGICIDDALADSTEKVALTLHPDASLLERNTSDAKISEGKTFSFYSNLLRSNCPVTNQPDWGTLAVSITSNKPVNNANMLRYILSFRQHNGFHEQCVEQIFADLSQYYEPSELMVRAWYTRRGGIDINPCRVSDIALLPVPSRLIRQ.

Substrate is bound at residue 80–82; the sequence is VES. 82-83 lines the NADPH pocket; it reads SK. C191 functions as the Thioimide intermediate in the catalytic mechanism. D198 acts as the Proton donor in catalysis. A substrate-binding site is contributed by 231-232; the sequence is HE. 260-261 contacts NADPH; the sequence is RG.

The protein belongs to the GTP cyclohydrolase I family. QueF type 2 subfamily. As to quaternary structure, homodimer.

The protein resides in the cytoplasm. The enzyme catalyses 7-aminomethyl-7-carbaguanine + 2 NADP(+) = 7-cyano-7-deazaguanine + 2 NADPH + 3 H(+). It participates in tRNA modification; tRNA-queuosine biosynthesis. Functionally, catalyzes the NADPH-dependent reduction of 7-cyano-7-deazaguanine (preQ0) to 7-aminomethyl-7-deazaguanine (preQ1). In Psychrobacter cryohalolentis (strain ATCC BAA-1226 / DSM 17306 / VKM B-2378 / K5), this protein is NADPH-dependent 7-cyano-7-deazaguanine reductase.